The chain runs to 335 residues: Tetraacyldisaccharide 4'-kinase (335 aa).

51 to 58 (HVGGAGKT) contributes to the ATP binding site.

It belongs to the LpxK family.

It catalyses the reaction a lipid A disaccharide + ATP = a lipid IVA + ADP + H(+). Its pathway is glycolipid biosynthesis; lipid IV(A) biosynthesis; lipid IV(A) from (3R)-3-hydroxytetradecanoyl-[acyl-carrier-protein] and UDP-N-acetyl-alpha-D-glucosamine: step 6/6. In terms of biological role, transfers the gamma-phosphate of ATP to the 4'-position of a tetraacyldisaccharide 1-phosphate intermediate (termed DS-1-P) to form tetraacyldisaccharide 1,4'-bis-phosphate (lipid IVA). The polypeptide is Tetraacyldisaccharide 4'-kinase (Nitrobacter hamburgensis (strain DSM 10229 / NCIMB 13809 / X14)).